A 170-amino-acid chain; its full sequence is Inosine/xanthosine triphosphatase (170 aa).

The protein belongs to the YjjX NTPase family. In terms of assembly, homodimer. Mg(2+) serves as cofactor. Mn(2+) is required as a cofactor.

The enzyme catalyses XTP + H2O = XDP + phosphate + H(+). It carries out the reaction ITP + H2O = IDP + phosphate + H(+). Functionally, phosphatase that hydrolyzes non-canonical purine nucleotides such as XTP and ITP to their respective diphosphate derivatives. Probably excludes non-canonical purines from DNA/RNA precursor pool, thus preventing their incorporation into DNA/RNA and avoiding chromosomal lesions. This Aliivibrio fischeri (strain MJ11) (Vibrio fischeri) protein is Inosine/xanthosine triphosphatase.